The sequence spans 852 residues: Lon protease homolog 2, peroxisomal (852 aa).

An N-acetylserine modification is found at Ser-2. Residues 13–222 (LPLLLTHEGV…MTIPLLVRQI (210 aa)) enclose the Lon N-terminal domain. An ATP-binding site is contributed by 375 to 382 (GPPGVGKT). The region spanning 651–837 (LSQPGVAIGL…DEVLNAAFDG (187 aa)) is the Lon proteolytic domain. Residues Ser-743 and Lys-786 contribute to the active site. Residues 850 to 852 (SKL) carry the Microbody targeting signal motif.

This sequence belongs to the peptidase S16 family. As to quaternary structure, interacts with PEX5. Interacts with TYSND1. May interact with enzymes involved in beta-oxidation of fatty acids, including ACOX1/AOX. Widely expressed, with high levels in the liver, kidney and pancreas.

The protein localises to the peroxisome matrix. It carries out the reaction Hydrolysis of proteins in presence of ATP.. Its function is as follows. ATP-dependent serine protease that mediates the selective degradation of misfolded and unassembled polypeptides in the peroxisomal matrix. Necessary for type 2 peroxisome targeting signal (PTS2)-containing protein processing and facilitates peroxisome matrix protein import. May indirectly regulate peroxisomal fatty acid beta-oxidation through degradation of the self-processed forms of TYSND1. This chain is Lon protease homolog 2, peroxisomal, found in Homo sapiens (Human).